Consider the following 199-residue polypeptide: GTP cyclohydrolase-2 (199 aa).

52-56 serves as a coordination point for GTP; that stretch reads RMHSE. Positions 57, 68, and 70 each coordinate Zn(2+). Residues Gln73, 94–96, and Thr116 each bind GTP; that span reads EGR. The active-site Proton acceptor is the Asp128. The Nucleophile role is filled by Arg130. Thr151 and Lys156 together coordinate GTP.

This sequence belongs to the GTP cyclohydrolase II family. The cofactor is Zn(2+).

It carries out the reaction GTP + 4 H2O = 2,5-diamino-6-hydroxy-4-(5-phosphoribosylamino)-pyrimidine + formate + 2 phosphate + 3 H(+). It participates in cofactor biosynthesis; riboflavin biosynthesis; 5-amino-6-(D-ribitylamino)uracil from GTP: step 1/4. Functionally, catalyzes the conversion of GTP to 2,5-diamino-6-ribosylamino-4(3H)-pyrimidinone 5'-phosphate (DARP), formate and pyrophosphate. The sequence is that of GTP cyclohydrolase-2 from Aliivibrio fischeri (strain MJ11) (Vibrio fischeri).